A 198-amino-acid chain; its full sequence is Na(+)-translocating NADH-quinone reductase subunit E (198 aa).

6 consecutive transmembrane segments (helical) span residues 11–31 (SIFI…FLAV), 39–59 (FGLG…NNLV), 77–97 (FLNF…LEMV), 110–130 (GIFL…SFMV), 140–160 (IVYG…LAGI), and 176–196 (LGIT…FSGV).

This sequence belongs to the NqrDE/RnfAE family. Composed of six subunits; NqrA, NqrB, NqrC, NqrD, NqrE and NqrF.

It is found in the cell inner membrane. The enzyme catalyses a ubiquinone + n Na(+)(in) + NADH + H(+) = a ubiquinol + n Na(+)(out) + NAD(+). In terms of biological role, NQR complex catalyzes the reduction of ubiquinone-1 to ubiquinol by two successive reactions, coupled with the transport of Na(+) ions from the cytoplasm to the periplasm. NqrA to NqrE are probably involved in the second step, the conversion of ubisemiquinone to ubiquinol. The sequence is that of Na(+)-translocating NADH-quinone reductase subunit E from Vibrio campbellii (strain ATCC BAA-1116).